Here is a 573-residue protein sequence, read N- to C-terminus: uncharacterized protein (573 aa).

Residues 15–298 form the ABC transmembrane type-1 domain; that stretch reads AGIALILMLT…FPFLIMIFTR (284 aa). Helical transmembrane passes span 17 to 37, 52 to 72, 127 to 147, 153 to 173, 238 to 258, and 275 to 295; these read IALILMLTELAVELMQPLLIA, VWIWGTVMIGLTVLSFAAGML, IFMSLRFMLRAPLMIAGGIVL, VKLGFFLLVTIPILILFLLWV, FTMPVLMLLMNLCILLILWAG, and IINYATRITGALSMFPFLIMI. The ABC transporter domain occupies 330–563; sequence IEFQHVSFRY…SQLYKRIYES (234 aa). 364 to 371 contributes to the ATP binding site; that stretch reads GATGSGKS.

It belongs to the ABC transporter superfamily.

It is found in the cell membrane. This is an uncharacterized protein from Bacillus subtilis (strain 168).